Here is a 580-residue protein sequence, read N- to C-terminus: Laccase-20 (580 aa).

An N-terminal signal peptide occupies residues 1-23; it reads MVASLLCTVAVAVLAVAAVGGEA. Plastocyanin-like domains lie at 31-147 and 156-310; these read VVHE…PRDG and KDVP…YTGV. Residues Asn-36 and Asn-42 are each glycosylated (N-linked (GlcNAc...) asparagine). His-81 and His-83 together coordinate Cu cation. Asn-115 carries N-linked (GlcNAc...) asparagine glycosylation. Residues His-126 and His-128 each coordinate Cu cation. 7 N-linked (GlcNAc...) asparagine glycosylation sites follow: Asn-200, Asn-339, Asn-373, Asn-392, Asn-399, Asn-429, and Asn-460. Positions 419-561 constitute a Plastocyanin-like 3 domain; it reads DFPVRPPRPY…ATAFIVEDGP (143 aa). Cu cation is bound by residues Asn-478, His-481, His-483, His-540, Cys-541, His-542, His-546, and Met-551. The interval 560-580 is disordered; it reads GPTPETSLPPPPPEFKRCDAS.

Belongs to the multicopper oxidase family. Cu cation is required as a cofactor.

It is found in the secreted. Its subcellular location is the extracellular space. It localises to the apoplast. The enzyme catalyses 4 hydroquinone + O2 = 4 benzosemiquinone + 2 H2O. Lignin degradation and detoxification of lignin-derived products. The protein is Laccase-20 (LAC20) of Oryza sativa subsp. japonica (Rice).